The following is a 242-amino-acid chain: UPF0309 protein BAbS19_II03080 (242 aa).

Positions 30–214 constitute an SIS domain; sequence AADLIAAAAR…ARLVGEGDAP (185 aa).

The protein belongs to the UPF0309 family.

This chain is UPF0309 protein BAbS19_II03080, found in Brucella abortus (strain S19).